The sequence spans 242 residues: Probable ABC transporter ATP-binding protein PEB1C (242 aa).

Residues 2–236 (IELKNVNKYY…PKTERARLFL (235 aa)) form the ABC transporter domain. An ATP-binding site is contributed by 34-41 (GPSGSGKS).

This sequence belongs to the ABC transporter superfamily.

It is found in the cell inner membrane. Most probably involved, with PEB1, in a binding-protein-dependent transport system for an amino acid. Probably responsible for energy coupling to the transport system. The protein is Probable ABC transporter ATP-binding protein PEB1C (peb1C) of Campylobacter jejuni subsp. jejuni serotype O:2 (strain ATCC 700819 / NCTC 11168).